Here is a 394-residue protein sequence, read N- to C-terminus: Elongation factor Tu (394 aa).

The tr-type G domain occupies 10 to 204 (KPHINVGTIG…FLDTYIPEPK (195 aa)). Residues 19–26 (GHVDHGKT) form a G1 region. 19–26 (GHVDHGKT) is a GTP binding site. Thr-26 is a Mg(2+) binding site. The tract at residues 60-64 (GITIN) is G2. The interval 81 to 84 (DCPG) is G3. Residues 81 to 85 (DCPGH) and 136 to 139 (NKCD) each bind GTP. The G4 stretch occupies residues 136 to 139 (NKCD). The G5 stretch occupies residues 174–176 (SAL).

This sequence belongs to the TRAFAC class translation factor GTPase superfamily. Classic translation factor GTPase family. EF-Tu/EF-1A subfamily. As to quaternary structure, monomer.

The protein localises to the cytoplasm. The catalysed reaction is GTP + H2O = GDP + phosphate + H(+). Its function is as follows. GTP hydrolase that promotes the GTP-dependent binding of aminoacyl-tRNA to the A-site of ribosomes during protein biosynthesis. The chain is Elongation factor Tu from Buchnera aphidicola subsp. Schizaphis graminum (strain Sg).